A 617-amino-acid polypeptide reads, in one-letter code: COMPASS component cclA (617 aa).

2 stretches are compositionally biased toward low complexity: residues 1–19 (MASIQPAGSSAPSSNINSP) and 40–50 (SSPAPASNASA). The interval 1-89 (MASIQPAGSS…AKKRATAVQN (89 aa)) is disordered. The segment covering 57-69 (SKRNKRDSRKKRE) has biased composition (basic residues). One can recognise a B30.2/SPRY domain in the interval 157–380 (IADTSFPHIK…YAFNLKETPT (224 aa)). The interval 595–617 (TPNTEEPAARPENITVGHDVEMS) is disordered.

Belongs to the cclA family. In terms of assembly, component of the COMPASS complex.

Its subcellular location is the nucleus. It localises to the chromosome. The protein localises to the telomere. Component of the COMPASS (Set1C) complex that specifically mono-, di- and trimethylates histone H3 to form H3K4me1/2/3, which subsequently plays a role in telomere length maintenance and transcription elongation regulation. Controls the production of several secondary metabolites, including astellolides. The polypeptide is COMPASS component cclA (Aspergillus oryzae (strain ATCC 42149 / RIB 40) (Yellow koji mold)).